Reading from the N-terminus, the 217-residue chain is Carbon disulfide hydrolase (217 aa).

Positions 39, 98, and 101 each coordinate Zn(2+). Residues 192 to 217 (DKEKRARTDCTPTPYGVKGNQPPRWK) form a disordered region.

It belongs to the beta-class carbonic anhydrase family. In terms of assembly, forms only homooctamers in solution. Zn(2+) serves as cofactor.

The enzyme catalyses carbon disulfide + 2 H2O = 2 hydrogen sulfide + CO2 + 2 H(+). Its pathway is sulfur metabolism; hydrogen sulfide biosynthesis. In terms of biological role, catalyzes the conversion of carbon disulfide into hydrogen sulfide and carbon dioxide, with carbonyl sulfide as an intermediate. Likely plays a key role in sulfur metabolism that allows A.thiooxidans S1p to grow on carbon disulfide as the main carbon and energy source. Does not show carbonic anhydrase activity (hydration of CO(2) to carbonate). In Acidithiobacillus thiooxidans (Thiobacillus thiooxidans), this protein is Carbon disulfide hydrolase.